Here is a 276-residue protein sequence, read N- to C-terminus: Rhomboid-type serine protease 2 (276 aa).

The next 5 membrane-spanning stretches (helical) occupy residues 27–47 (LPLFTRATVLIIVLTWVLTLV), 77–97 (FPFIHLNIFHTILNIVAFTPL), 109–129 (TSVALFFGPFATIPGLIYVFV), 132–152 (FILHANTPVMGASMWVFLLLG), and 175–195 (WITPLLLVVVTAALLPSSSFL). The active-site Nucleophile is the Ser144. His197 is a catalytic residue. Residues 198–218 (LAGLLVGYGFGLGYLKFLAPP) traverse the membrane as a helical segment.

It belongs to the peptidase S54 family.

The protein localises to the golgi apparatus membrane. It localises to the golgi apparatus. Its subcellular location is the cis-Golgi network membrane. The enzyme catalyses Cleaves type-1 transmembrane domains using a catalytic dyad composed of serine and histidine that are contributed by different transmembrane domains.. Functionally, probable rhomboid-type serine protease that catalyzes intramembrane proteolysis. The sequence is that of Rhomboid-type serine protease 2 (rbd-2) from Neurospora crassa (strain ATCC 24698 / 74-OR23-1A / CBS 708.71 / DSM 1257 / FGSC 987).